The chain runs to 377 residues: Flagellin D (377 aa).

Residues 104 to 128 (NSKADRVAIQEEVTALNDELNRIAE) adopt a coiled-coil conformation.

This sequence belongs to the bacterial flagellin family. As to quaternary structure, heteromer of multiple flagellin subunits including FlaA, FlaB, FlaC, FlaD and possibly FlaE.

The protein resides in the secreted. Its subcellular location is the bacterial flagellum. Its function is as follows. Flagellin is the subunit protein which polymerizes to form the filaments of bacterial flagella. FlaD is not essential for flagellar synthesis and motility. May have a role in virulence unrelated to motility. The protein is Flagellin D (flaD) of Vibrio anguillarum (Listonella anguillarum).